The sequence spans 157 residues: Large ribosomal subunit protein eL24 (157 aa).

Residues 94-157 (RNQKPEVRKA…ISAPRVGGKR (64 aa)) are disordered. Basic and acidic residues predominate over residues 96 to 117 (QKPEVRKAQREQAIRAAKEAKK). Residues 123–140 (KKPAAPSAKASTKTAQKP) show a composition bias toward low complexity.

This sequence belongs to the eukaryotic ribosomal protein eL24 family. As to quaternary structure, component of the large ribosomal subunit.

The protein resides in the cytoplasm. Its function is as follows. Component of the large ribosomal subunit. The ribosome is a large ribonucleoprotein complex responsible for the synthesis of proteins in the cell. The polypeptide is Large ribosomal subunit protein eL24 (rpl24) (Pagrus major (Red sea bream)).